We begin with the raw amino-acid sequence, 348 residues long: Small ribosomal subunit biogenesis GTPase RsgA (348 aa).

Residues 1-32 (MAKQKLTQNQKRRIHSNNAKALDRHRRQTKKQ) form a disordered region. The 169-residue stretch at 106-274 (KNELSRPDYY…LIDSPGIREF (169 aa)) folds into the CP-type G domain. Residues 162–165 (NKID) and 216–224 (GQSGVGKSS) each bind GTP. Zn(2+) is bound by residues C298, C303, H305, and C311.

This sequence belongs to the TRAFAC class YlqF/YawG GTPase family. RsgA subfamily. Monomer. Associates with 30S ribosomal subunit, binds 16S rRNA. The cofactor is Zn(2+).

It localises to the cytoplasm. Functionally, one of several proteins that assist in the late maturation steps of the functional core of the 30S ribosomal subunit. Helps release RbfA from mature subunits. May play a role in the assembly of ribosomal proteins into the subunit. Circularly permuted GTPase that catalyzes slow GTP hydrolysis, GTPase activity is stimulated by the 30S ribosomal subunit. This Actinobacillus succinogenes (strain ATCC 55618 / DSM 22257 / CCUG 43843 / 130Z) protein is Small ribosomal subunit biogenesis GTPase RsgA.